The following is a 288-amino-acid chain: MAEKKQWHETLHDQFGQYFAVDNVLYHEKTDHQDLIIFENAAFGRVMALDGVVQTTERDEFIYHEMMTHVPLLAHGHAKHVLIIGGGDGAMLREVTRHKNVESITMVEIDAGVVSFCRQYLPNHNAGSYDDPRFQLVIDDGVNFVNQTSQTFDVIISDCTDPIGPGESLFTSAFYEGCKRCLNPGGIFVAQNGVCFLQQEEAIDSHRKLSHYFSDVGFYQAAIPTYYGGIMTFAWATDNDALRHLSTEIIQARFLASGLKCRYYNPAIHTAAFALPQYLQDALASQPS.

Residues 9–238 (ETLHDQFGQY…GIMTFAWATD (230 aa)) form the PABS domain. Gln-33 is an S-methyl-5'-thioadenosine binding site. Residues His-64 and Asp-88 each coordinate spermidine. Residues Glu-108 and 140–141 (DG) contribute to the S-methyl-5'-thioadenosine site. Asp-158 acts as the Proton acceptor in catalysis. 158–161 (DCTD) provides a ligand contact to spermidine. Residue Pro-165 coordinates S-methyl-5'-thioadenosine.

Belongs to the spermidine/spermine synthase family. As to quaternary structure, homodimer or homotetramer.

The protein resides in the cytoplasm. The enzyme catalyses S-adenosyl 3-(methylsulfanyl)propylamine + putrescine = S-methyl-5'-thioadenosine + spermidine + H(+). Its pathway is amine and polyamine biosynthesis; spermidine biosynthesis; spermidine from putrescine: step 1/1. Catalyzes the irreversible transfer of a propylamine group from the amino donor S-adenosylmethioninamine (decarboxy-AdoMet) to putrescine (1,4-diaminobutane) to yield spermidine. The protein is Polyamine aminopropyltransferase of Shigella flexneri serotype 5b (strain 8401).